Consider the following 467-residue polypeptide: Ribosome biogenesis protein YTM1 (467 aa).

Residues 8–95 (IKIKFFTNEE…ETFLSLEYTR (88 aa)) form a ubiquitin-like (UBL) domain region. Residues 105-467 (SFNNEDWISS…QINKGSDISK (363 aa)) form a sufficient for interaction with ERB1 and association with 66S pre-ribosomes region. 7 WD repeats span residues 120 to 159 (KTLP…EKQY), 161 to 199 (GHSG…GSIP), 216 to 255 (GHKA…MTTI), 293 to 333 (SHTQ…CIDT), 335 to 374 (STGY…NTTE), 382 to 422 (GHTN…SLYT), and 432 to 467 (KGAD…DISK).

Belongs to the WD repeat WDR12/YTM1 family. As to quaternary structure, component of the NOP7 complex, composed of ERB1, NOP7 and YTM1. The complex is held together by ERB1, which interacts with NOP7 via its N-terminal domain and with YTM1 via a high-affinity interaction between the seven-bladed beta-propeller domains of the 2 proteins. The NOP7 complex associates with the 66S pre-ribosome. Interacts (via UBL domain) with MDN1 (via VWFA/MIDAS domain).

It is found in the nucleus. The protein localises to the nucleolus. Its subcellular location is the nucleoplasm. In terms of biological role, component of the NOP7 complex, which is required for maturation of the 25S and 5.8S ribosomal RNAs and formation of the 60S ribosome. This chain is Ribosome biogenesis protein YTM1, found in Scheffersomyces stipitis (strain ATCC 58785 / CBS 6054 / NBRC 10063 / NRRL Y-11545) (Yeast).